A 214-amino-acid chain; its full sequence is Phosphoheptose isomerase (214 aa).

Positions 51 to 209 constitute an SIS domain; the sequence is IASTFEDGGK…IDLVERLLGY (159 aa). Residue 66–68 participates in substrate binding; the sequence is NGG. Residues histidine 75 and glutamate 79 each contribute to the Zn(2+) site. Residues glutamate 79, 110 to 111, 136 to 138, serine 141, and glutamine 189 contribute to the substrate site; these read ND and STS. Zn(2+)-binding residues include glutamine 189 and histidine 197.

The protein belongs to the SIS family. GmhA subfamily. It depends on Zn(2+) as a cofactor.

The protein localises to the cytoplasm. The enzyme catalyses 2 D-sedoheptulose 7-phosphate = D-glycero-alpha-D-manno-heptose 7-phosphate + D-glycero-beta-D-manno-heptose 7-phosphate. It functions in the pathway carbohydrate biosynthesis; D-glycero-D-manno-heptose 7-phosphate biosynthesis; D-glycero-alpha-D-manno-heptose 7-phosphate and D-glycero-beta-D-manno-heptose 7-phosphate from sedoheptulose 7-phosphate: step 1/1. Functionally, catalyzes the isomerization of sedoheptulose 7-phosphate in D-glycero-D-manno-heptose 7-phosphate. The protein is Phosphoheptose isomerase of Chlorobium limicola (strain DSM 245 / NBRC 103803 / 6330).